A 336-amino-acid chain; its full sequence is MRRAAVLTAGSWGSVFAKVLADAGARVNLVARDPEIVRAVNTRQVNPRYLPAIQLPDRVRAMSDAGEALAGAEFVVLAVPSQALRSVLAGWAPLIGPDAVYVSLMKGVEVGSQLRMSEVITQVTGVSPDRIAVVSGPNLAPEIAAEQPAATVVASTSTSTAEAVQAACWTPYFRPYTNTDVIGCELGGAIKNVIALAAGMLEGMGFGTNSLASLMTRGLAETLRLGVALGADPMTFAGLAGLGDLVATCGSPLSRNRTFGEKLGRGLTLAQVEAEQQQVAEGVRSCRPLLAMADDLGVAMPITRQVERVLYEGLPPMEAVKDLMSREPGPEYRLRP.

Residues serine 11, tryptophan 12, arginine 32, and lysine 106 each contribute to the NADPH site. 2 residues coordinate sn-glycerol 3-phosphate: lysine 106 and glycine 136. Alanine 140 serves as a coordination point for NADPH. Lysine 191, aspartate 244, serine 254, arginine 255, and asparagine 256 together coordinate sn-glycerol 3-phosphate. Lysine 191 serves as the catalytic Proton acceptor. Position 255 (arginine 255) interacts with NADPH. Positions 279 and 281 each coordinate NADPH.

Belongs to the NAD-dependent glycerol-3-phosphate dehydrogenase family.

It is found in the cytoplasm. The catalysed reaction is sn-glycerol 3-phosphate + NAD(+) = dihydroxyacetone phosphate + NADH + H(+). It catalyses the reaction sn-glycerol 3-phosphate + NADP(+) = dihydroxyacetone phosphate + NADPH + H(+). Its pathway is membrane lipid metabolism; glycerophospholipid metabolism. Catalyzes the reduction of the glycolytic intermediate dihydroxyacetone phosphate (DHAP) to sn-glycerol 3-phosphate (G3P), the key precursor for phospholipid synthesis. This is Glycerol-3-phosphate dehydrogenase [NAD(P)+] from Frankia casuarinae (strain DSM 45818 / CECT 9043 / HFP020203 / CcI3).